A 78-amino-acid chain; its full sequence is MALIKKTFFFLFAMFFILVQLSSGCQAGLDFSQPFPSGEFAVCESCKLGRGKCRKECLENEKPDGNCRLNFLCCRQRI.

Residues 1 to 27 form the signal peptide; sequence MALIKKTFFFLFAMFFILVQLSSGCQA. Intrachain disulfides connect cysteine 43-cysteine 74, cysteine 53-cysteine 67, and cysteine 57-cysteine 73.

Belongs to the beta-defensin family.

Its subcellular location is the secreted. Functionally, has antimicrobial activity. The chain is Beta-defensin 105A (DEFB105A) from Pan troglodytes (Chimpanzee).